We begin with the raw amino-acid sequence, 353 residues long: Protein RecA (353 aa).

68-75 (GPESSGKT) lines the ATP pocket.

It belongs to the RecA family.

The protein localises to the cytoplasm. Its function is as follows. Can catalyze the hydrolysis of ATP in the presence of single-stranded DNA, the ATP-dependent uptake of single-stranded DNA by duplex DNA, and the ATP-dependent hybridization of homologous single-stranded DNAs. It interacts with LexA causing its activation and leading to its autocatalytic cleavage. The chain is Protein RecA from Roseiflexus castenholzii (strain DSM 13941 / HLO8).